An 892-amino-acid chain; its full sequence is Alanine--tRNA ligase (892 aa).

Positions 578, 582, 681, and 685 each coordinate Zn(2+).

The protein belongs to the class-II aminoacyl-tRNA synthetase family. Zn(2+) is required as a cofactor.

The protein localises to the cytoplasm. The catalysed reaction is tRNA(Ala) + L-alanine + ATP = L-alanyl-tRNA(Ala) + AMP + diphosphate. Catalyzes the attachment of alanine to tRNA(Ala) in a two-step reaction: alanine is first activated by ATP to form Ala-AMP and then transferred to the acceptor end of tRNA(Ala). Also edits incorrectly charged Ser-tRNA(Ala) and Gly-tRNA(Ala) via its editing domain. In Cutibacterium acnes (strain DSM 16379 / KPA171202) (Propionibacterium acnes), this protein is Alanine--tRNA ligase.